The chain runs to 403 residues: UPF0284 protein PMT_1350 (403 aa).

This sequence belongs to the UPF0284 family.

The polypeptide is UPF0284 protein PMT_1350 (Prochlorococcus marinus (strain MIT 9313)).